Here is a 440-residue protein sequence, read N- to C-terminus: Xaa-Pro dipeptidase (440 aa).

Mn(2+)-binding residues include Asp-244, Asp-255, His-335, Glu-380, and Glu-419.

Belongs to the peptidase M24B family. Bacterial-type prolidase subfamily. It depends on Mn(2+) as a cofactor.

The enzyme catalyses Xaa-L-Pro dipeptide + H2O = an L-alpha-amino acid + L-proline. Splits dipeptides with a prolyl residue in the C-terminal position. The sequence is that of Xaa-Pro dipeptidase from Shewanella pealeana (strain ATCC 700345 / ANG-SQ1).